The primary structure comprises 286 residues: Isopentenyl-diphosphate Delta-isomerase II (286 aa).

Residues 104–256 (MLHRAFSVFL…GLKLSPWFRL (153 aa)) form the Nudix hydrolase domain. Residues C141 and E203 contribute to the active site.

The protein belongs to the IPP isomerase type 1 family.

It catalyses the reaction isopentenyl diphosphate = dimethylallyl diphosphate. The protein operates within isoprenoid biosynthesis; dimethylallyl diphosphate biosynthesis; dimethylallyl diphosphate from isopentenyl diphosphate: step 1/1. It participates in porphyrin-containing compound metabolism; chlorophyll biosynthesis. In terms of biological role, catalyzes the 1,3-allylic rearrangement of the homoallylic substrate isopentenyl (IPP) to its highly electrophilic allylic isomer, dimethylallyl diphosphate (DMAPP). The protein is Isopentenyl-diphosphate Delta-isomerase II (IPI2) of Clarkia breweri (Fairy fans).